A 252-amino-acid polypeptide reads, in one-letter code: Small ribosomal subunit protein eS1A (252 aa).

The residue at position 2 (A2) is an N-acetylalanine; partial.

This sequence belongs to the eukaryotic ribosomal protein eS1 family. Component of the small ribosomal subunit (SSU). Mature yeast ribosomes consist of a small (40S) and a large (60S) subunit. The 40S small subunit contains 1 molecule of ribosomal RNA (18S rRNA) and at least 33 different proteins. The large 60S subunit contains 3 rRNA molecules (25S, 5.8S and 5S rRNA) and at least 46 different proteins. eS1 interacts directly with uS11 and eS26, which form part of the mRNA exit tunnel.

The protein localises to the cytoplasm. Functionally, component of the ribosome, a large ribonucleoprotein complex responsible for the synthesis of proteins in the cell. The small ribosomal subunit (SSU) binds messenger RNAs (mRNAs) and translates the encoded message by selecting cognate aminoacyl-transfer RNA (tRNA) molecules. The large subunit (LSU) contains the ribosomal catalytic site termed the peptidyl transferase center (PTC), which catalyzes the formation of peptide bonds, thereby polymerizing the amino acids delivered by tRNAs into a polypeptide chain. The nascent polypeptides leave the ribosome through a tunnel in the LSU and interact with protein factors that function in enzymatic processing, targeting, and the membrane insertion of nascent chains at the exit of the ribosomal tunnel. This is Small ribosomal subunit protein eS1A (rps101) from Schizosaccharomyces pombe (strain 972 / ATCC 24843) (Fission yeast).